A 330-amino-acid chain; its full sequence is Aspartate--ammonia ligase (330 aa).

Belongs to the class-II aminoacyl-tRNA synthetase family. AsnA subfamily.

The protein resides in the cytoplasm. It catalyses the reaction L-aspartate + NH4(+) + ATP = L-asparagine + AMP + diphosphate + H(+). It participates in amino-acid biosynthesis; L-asparagine biosynthesis; L-asparagine from L-aspartate (ammonia route): step 1/1. This Streptococcus pneumoniae serotype 2 (strain D39 / NCTC 7466) protein is Aspartate--ammonia ligase.